A 142-amino-acid chain; its full sequence is Hemoglobin subunit alpha (142 aa).

Positions 2-142 (VLSSADKNNV…VSTVLTSKYR (141 aa)) constitute a Globin domain. Position 4 is a phosphoserine (serine 4). 2 positions are modified to N6-succinyllysine: lysine 8 and lysine 12. Lysine 17 bears the N6-acetyllysine; alternate mark. Lysine 17 carries the N6-succinyllysine; alternate modification. A Phosphotyrosine modification is found at tyrosine 25. Serine 36 carries the phosphoserine modification. The residue at position 41 (lysine 41) is an N6-succinyllysine. The residue at position 50 (serine 50) is a Phosphoserine. An O2-binding site is contributed by histidine 59. Histidine 88 contacts heme b. The residue at position 103 (serine 103) is a Phosphoserine. Threonine 109 carries the post-translational modification Phosphothreonine. A Phosphoserine modification is found at serine 125. Phosphothreonine is present on residues threonine 135 and threonine 138. Position 139 is a phosphoserine (serine 139).

This sequence belongs to the globin family. As to quaternary structure, heterotetramer of two alpha chains and two beta chains. As to expression, red blood cells.

Involved in oxygen transport from the lung to the various peripheral tissues. Functionally, hemopressin acts as an antagonist peptide of the cannabinoid receptor CNR1. Hemopressin-binding efficiently blocks cannabinoid receptor CNR1 and subsequent signaling. This Panthera onca (Jaguar) protein is Hemoglobin subunit alpha (HBA).